A 95-amino-acid chain; its full sequence is Transcription and mRNA export factor ENY2-1 (95 aa).

Belongs to the ENY2 family. Component of the nuclear pore complex (NPC)-associated TREX-2 complex (transcription and export complex 2). Component of the SAGA transcription coactivator-HAT complex. Within the SAGA complex, participates in a subcomplex of SAGA called the DUB module (deubiquitination module).

Its subcellular location is the nucleus. The protein localises to the nucleoplasm. Functionally, involved in mRNA export coupled transcription activation by association with both the TREX-2 and the SAGA complexes. The transcription regulatory histone acetylation (HAT) complex SAGA is a multiprotein complex that activates transcription by remodeling chromatin and mediating histone acetylation and deubiquitination. Within the SAGA complex, participates in a subcomplex that specifically deubiquitinates histones. The SAGA complex is recruited to specific gene promoters by activators, where it is required for transcription. The TREX-2 complex functions in docking export-competent ribonucleoprotein particles (mRNPs) to the nuclear entrance of the nuclear pore complex (nuclear basket). TREX-2 participates in mRNA export and accurate chromatin positioning in the nucleus by tethering genes to the nuclear periphery. The sequence is that of Transcription and mRNA export factor ENY2-1 (eny2-1) from Salmo salar (Atlantic salmon).